Reading from the N-terminus, the 729-residue chain is Disintegrin and metalloproteinase domain-containing protein 21 (729 aa).

Residues 1–39 (MECFIMLGADARTLMRVTLLLLWLKALPSLIDLSQTGST) form the signal peptide. Positions 40-209 (QYLSSPEVVI…MKQNYGKLWP (170 aa)) are excised as a propeptide. Asn-169 carries an N-linked (GlcNAc...) asparagine glycan. The Cysteine switch signature appears at 176 to 183 (MLCSLTEK). Cys-178 provides a ligand contact to Zn(2+). Residues 210–685 (HMWFLELAVV…DSGPTSQKRR (476 aa)) lie on the Extracellular side of the membrane. The 191-residue stretch at 212–402 (WFLELAVVVD…NQGTCLYNHP (191 aa)) folds into the Peptidase M12B domain. Asn-231 is a glycosylation site (N-linked (GlcNAc...) asparagine). Disulfide bonds link Cys-320–Cys-397, Cys-360–Cys-382, and Cys-362–Cys-367. His-345 is a binding site for Zn(2+). Glu-346 is an active-site residue. Zn(2+) contacts are provided by His-349 and His-355. N-linked (GlcNAc...) asparagine glycosylation is found at Asn-381, Asn-441, and Asn-482. The Disintegrin domain occupies 410–496 (VKRCGNGMVE…QCPEDGYVQD (87 aa)). 4 disulfide bridges follow: Cys-468-Cys-488, Cys-638-Cys-649, Cys-643-Cys-655, and Cys-657-Cys-666. Residues 638–667 (CLPETCNRKGVCNNKHHCHCDYGWSPPFCL) enclose the EGF-like domain. Residues 686-706 (VIITVLSITVPVLSILICLLI) traverse the membrane as a helical segment. Residues 707–729 (AGLYRIYCKIPSGPKETKASSPG) lie on the Cytoplasmic side of the membrane.

The cofactor is Zn(2+). Has no obvious cleavage site for furin endopeptidase, suggesting that the proteolytic processing is regulated. As to expression, highly expressed in Leydig cells. Expressed also in cauda epididymidis, vas deferens, convoluted tubules, kidney and the parietal cells of stomach. Not detected on developing spermatocytes or mature sperm.

The protein resides in the membrane. May be involved in sperm maturation and/or fertilization. May also be involved in epithelia functions associated with establishing and maintaining gradients of ions or nutrients. In Mus musculus (Mouse), this protein is Disintegrin and metalloproteinase domain-containing protein 21 (Adam21).